Here is a 178-residue protein sequence, read N- to C-terminus: Transmembrane protein 196 (178 aa).

The next 4 helical transmembrane spans lie at 11–31 (LLVLSVLEIGLGVSSVAVGAV), 47–67 (SSPVWSGVCFLLCGICGILCA), 73–93 (LVMILFSACCICGLIGGILNF), and 106–126 (LYPLHLASMSLACIGIGGCTL).

Expression is significantly decreased in lung cancer cells compared to normal lung tissue (at protein level).

It localises to the cytoplasm. It is found in the membrane. Functionally, acts as a tumor suppressor in lung cancer. Inhibits tumor cell growth by inhibiting cell proliferation and migration and promoting cell apoptosis. Inhibits metastasis of lung cancer by suppressing beta-catenin expression in the Wnt/beta-catenin signaling pathway. This is Transmembrane protein 196 (TMEM196) from Homo sapiens (Human).